The sequence spans 502 residues: MAQVLSTPLAIPGPTPIQFMAGLLARIVTKNTNKETSTPESPRSPRTPQGSILMDKYEIGKLLGHGSFAKVYLARNIHSGEDVAIKVIDKEKIVKSGLAGHIKREISILRRVRHPYIVHLLEVMATKTKIYIVMEYVRGGELYNTVARGRLREGTARRYFQQLISSVAFCHSRGVYHRDLKLENLLLDDKGNVKVSDFGLSVVSEQLKQEGICQTFCGTPAYLAPEVLTRKGYEGAKADIWSCGVILFVLMAGYLPFDDKNILVMYTKIYKGQFKCPKWFSPELARLVTRMLDTNPDTRITIPEIMKHRWFKKGFKHVKFYIENDKLCREDDDNDDDDSSSLSSGRSSTASEGDAEFDIKRVDSMPRPASLNAFDILSFSDLSGLFEEGGQGARFVSAAPMTKIISKLEEIAKEVKFMVRKKDWSVRLEGCREGAKGPLTIRVEIFELTPSLVVVEVKKKGGNIEEYEEFCNKELRPQLEKLMHYQADEVEEVMCLPPEIEQ.

Residues 32–51 (TNKETSTPESPRSPRTPQGS) form a disordered region. Residues 35-48 (ETSTPESPRSPRTP) are compositionally biased toward low complexity. A Protein kinase domain is found at 57 to 311 (YEIGKLLGHG…IPEIMKHRWF (255 aa)). Residues 63-71 (LGHGSFAKV) and lysine 86 each bind ATP. The active-site Proton acceptor is the aspartate 179. Residues 197-226 (DFGLSVVSEQLKQEGICQTFCGTPAYLAPE) form an activation loop region. Phosphoserine is present on serine 201. Threonine 215 is subject to Phosphothreonine. Residues 331–359 (DDDNDDDDSSSLSSGRSSTASEGDAEFDI) are disordered. Residues 340-352 (SSLSSGRSSTASE) show a composition bias toward low complexity. The NAF domain occupies 366 to 387 (PRPASLNAFDILSFSDLSGLFE). The tract at residues 390 to 419 (GQGARFVSAAPMTKIISKLEEIAKEVKFMV) is PPI.

Belongs to the protein kinase superfamily. CAMK Ser/Thr protein kinase family. SNF1 subfamily. As to quaternary structure, interacts with CBL2 and CBL3. It depends on Mn(2+) as a cofactor.

It catalyses the reaction L-seryl-[protein] + ATP = O-phospho-L-seryl-[protein] + ADP + H(+). The enzyme catalyses L-threonyl-[protein] + ATP = O-phospho-L-threonyl-[protein] + ADP + H(+). Functionally, CIPK serine-threonine protein kinases interact with CBL proteins. Binding of a CBL protein to the regulatory NAF domain of CIPK protein lead to the activation of the kinase in a calcium-dependent manner. The polypeptide is CBL-interacting serine/threonine-protein kinase 13 (CIPK13) (Arabidopsis thaliana (Mouse-ear cress)).